The following is a 138-amino-acid chain: Superoxide dismutase [Mn] (138 aa).

Residues S1, H49, D133, and H137 each coordinate Mn(2+).

The protein belongs to the iron/manganese superoxide dismutase family. Requires Mn(2+) as cofactor.

The catalysed reaction is 2 superoxide + 2 H(+) = H2O2 + O2. Its function is as follows. Destroys superoxide anion radicals which are normally produced within the cells and which are toxic to biological systems. The protein is Superoxide dismutase [Mn] (sodA) of Mycobacterium marinum.